The sequence spans 179 residues: Large ribosomal subunit protein uL6 (179 aa).

It belongs to the universal ribosomal protein uL6 family. Part of the 50S ribosomal subunit.

Its function is as follows. This protein binds to the 23S rRNA, and is important in its secondary structure. It is located near the subunit interface in the base of the L7/L12 stalk, and near the tRNA binding site of the peptidyltransferase center. In Metamycoplasma arthritidis (strain 158L3-1) (Mycoplasma arthritidis), this protein is Large ribosomal subunit protein uL6.